The sequence spans 888 residues: 3-hydroxy-3-methylglutaryl-coenzyme A reductase (888 aa).

At 1 to 9 the chain is on the cytoplasmic side; it reads MLSRLFRMH. A helical membrane pass occupies residues 10–39; that stretch reads GLFVASHPWEVIVGTVTLTICMMSMNMFTG. Over 40–56 the chain is Lumenal; that stretch reads NDKICGWNYECPKFEED. Residues 57–78 traverse the membrane as a helical segment; it reads VLSSDIIILTITRCIAILYIYF. The region spanning 61-218 is the SSD domain; the sequence is DIIILTITRC…MTFFPACVSL (158 aa). Positions 75–78 match the INSIG-binding motif motif; it reads YIYF. Residues 79-89 lie on the Cytoplasmic side of the membrane; that stretch reads QFQNLRQLGSK. Lys89 is covalently cross-linked (Glycyl lysine isopeptide (Lys-Gly) (interchain with G-Cter in ubiquitin)). The chain crosses the membrane as a helical span at residues 90–114; sequence YILGIAGLFTIFSSFVFSTVVIHFL. The Lumenal segment spans residues 115–123; that stretch reads DKELTGLNE. Residues 124 to 149 form a helical membrane-spanning segment; it reads ALPFFLLLIDLSRASALAKFALSSNS. Topologically, residues 150-159 are cytoplasmic; that stretch reads QDEVRENIAR. A helical transmembrane segment spans residues 160-187; that stretch reads GMAILGPTFTLDALVECLVIGVGTMSGV. Over 188 to 191 the chain is Lumenal; the sequence is RQLE. A helical membrane pass occupies residues 192-220; it reads IMCCFGCMSVLANYFVFMTFFPACVSLVL. Topologically, residues 221–248 are cytoplasmic; the sequence is ELSRESREGRPIWQLSHFARVLEEEENK. Residue Lys248 forms a Glycyl lysine isopeptide (Lys-Gly) (interchain with G-Cter in ubiquitin) linkage. A helical membrane pass occupies residues 249-275; that stretch reads PNPVTQRVKMIMSLGLVLVHAHSRWIA. Over 276–314 the chain is Lumenal; sequence DPSPQNSTADNSKVSLGLDENVSKRIEPSVSLWQFYLSK. Asn281 and Asn296 each carry an N-linked (GlcNAc...) asparagine glycan. A helical membrane pass occupies residues 315–339; that stretch reads MISMDIEQVITLSLALLLAVKYIFF. Residues 340 to 888 lie on the Cytoplasmic side of the membrane; it reads EQAETESTLS…LEGACTKKAA (549 aa). Residues Glu559, Lys691, and Asp767 each act as charge relay system in the active site. The active-site Proton donor is His866. Residue Ser872 is modified to Phosphoserine; by AMPK.

The protein belongs to the HMG-CoA reductase family. In terms of assembly, homotetramer. Homodimer. Interacts (via its SSD) with INSIG1; the interaction, accelerated by sterols, leads to the recruitment of HMGCR to AMFR/gp78 for its ubiquitination by the sterol-mediated ERAD pathway. Interacts with UBIAD1. Undergoes sterol-mediated ubiquitination and ER-associated degradation (ERAD). Accumulation of sterols in the endoplasmic reticulum (ER) membrane, triggers binding of the reductase to the ER membrane protein INSIG1 or INSIG2. The INSIG1 binding leads to the recruitment of the ubiquitin ligase, AMFR/gp78, RNF139 or RNF145, initiating ubiquitination of the reductase. The ubiquitinated reductase is then extracted from the ER membrane and delivered to cytosolic 26S proteosomes by a mechanism probably mediated by the ATPase Valosin-containing protein VCP/p97. The INSIG2-binding leads to the recruitment of the ubiquitin ligase RNF139, initiating ubiquitination of the reductase. Lys-248 is the main site of ubiquitination. Ubiquitination is enhanced by the presence of a geranylgeranylated protein. Post-translationally, N-glycosylated. Deglycosylated by NGLY1 on release from the endoplasmic reticulum (ER) in a sterol-mediated manner. In terms of processing, phosphorylated. Phosphorylation at Ser-872 reduces the catalytic activity.

Its subcellular location is the endoplasmic reticulum membrane. It is found in the peroxisome membrane. It catalyses the reaction (R)-mevalonate + 2 NADP(+) + CoA = (3S)-3-hydroxy-3-methylglutaryl-CoA + 2 NADPH + 2 H(+). It functions in the pathway metabolic intermediate biosynthesis; (R)-mevalonate biosynthesis; (R)-mevalonate from acetyl-CoA: step 3/3. Its activity is regulated as follows. Regulated by a negative feedback mechanism through sterols and non-sterol metabolites derived from mevalonate. Phosphorylation at Ser-872 down-regulates the catalytic activity. Its function is as follows. Catalyzes the conversion of (3S)-hydroxy-3-methylglutaryl-CoA (HMG-CoA) to mevalonic acid, the rate-limiting step in the synthesis of cholesterol and other isoprenoids, thus plays a critical role in cellular cholesterol homeostasis. The sequence is that of 3-hydroxy-3-methylglutaryl-coenzyme A reductase (HMGCR) from Oryctolagus cuniculus (Rabbit).